A 521-amino-acid chain; its full sequence is Apolipoprotein N-acyltransferase (521 aa).

The next 6 helical transmembrane spans lie at 27-47 (VLLALSFPSPGISPLAWIAFA), 64-84 (LGFVTGLAAYAGILYWITIVV), 93-113 (IVSVGVLSMLVSYLALYPAVV), 125-145 (ISLLISFPLLWVGLEYGRAFL), 167-187 (IADITGVYGLSFLIALANVVL), and 202-222 (YPVKSVVLLLVLLLVTIAYGF). The CN hydrolase domain occupies 239–483 (IQGNIDQNIK…EAVLNGEVRL (245 aa)). Glutamate 281 (proton acceptor) is an active-site residue. Lysine 344 is an active-site residue. Cysteine 394 serves as the catalytic Nucleophile. A helical transmembrane segment spans residues 493–513 (YGDVFAWACVAGAAVVAALAF).

Belongs to the CN hydrolase family. Apolipoprotein N-acyltransferase subfamily.

Its subcellular location is the cell inner membrane. The catalysed reaction is N-terminal S-1,2-diacyl-sn-glyceryl-L-cysteinyl-[lipoprotein] + a glycerophospholipid = N-acyl-S-1,2-diacyl-sn-glyceryl-L-cysteinyl-[lipoprotein] + a 2-acyl-sn-glycero-3-phospholipid + H(+). Its pathway is protein modification; lipoprotein biosynthesis (N-acyl transfer). Catalyzes the phospholipid dependent N-acylation of the N-terminal cysteine of apolipoprotein, the last step in lipoprotein maturation. This Geobacter metallireducens (strain ATCC 53774 / DSM 7210 / GS-15) protein is Apolipoprotein N-acyltransferase.